Here is a 1156-residue protein sequence, read N- to C-terminus: MFPAAPSPRTPGTGSRRGPLAGLGPGSTPRTASRKGLPLGSAVSSPVLFSPVGRRSSLSSRGTPTRMFPHHSITESVNYDVKTFGSSLPVKVMEALTLAEVDDQLTINIDEGGWACLVCKEKLIIWKIALSPITKLSVCKELQLPPSDFHWSADLVALSYSSPSGEAHSTQAVAVMVATREGSIRYWPSLAGEDTYTEAFVDSGGDKTYSFLTAVQGGSFILSSSGSQLIRLIPESSGKIHQHILPQGQGMLSGIGRKVSSLFGILSPSSDLTLSSVLWDRERSSFYSLTSSNISKWELDDSSEKHAYSWDINRALKENITDAIWGSESNYEAIKEGVNIRYLDLKQNCDGLVILAAAWHSADNPCLIYYSLITIEDNGCQMSDAVTVEVTQYNPPFQSEDLILCQLTVPNFSNQTAYLYNESAVYVCSTGTGKFSLPQEKIVFNAQGDSVLGAGACGGVPIIFSRNSGLVSITSRENVSILAEDLEGSLASSVAGPNSESMIFETTTKNETIAQEDKIKLLKAAFLQYCRKDLGHAQMVVDELFSSHSDLDSDSELDRAVTQISVDLMDDYPASDPRWAESVPEEAPGFSNTSLIILHQLEDKMKAHSFLMDFIHQVGLFGRLGSFPVRGTPMATRLLLCEHAEKLSAAIVLKNHHSRLSDLVNTAILIALNKREYEIPSNLTPADVFFREVSQVDTICECLLEHEEQVLRDAPMDSIEWAEVVINVNNILKDMLQAASHYRQNRNSLYRREESLEKEPEYVPWTATSGPGGIRTVIIRQHEIVLKVAYPQADSNLRNIVTEQLVALIDCFLDGYVSQLKSVDKSSNRERYDNLEMEYLQKRSDLLSPLLSLGQYLWAASLAEKYCDFDILVQMCEQTDNQSRLQRYMTQFADQNFSDFLFRWYLEKGKRGKLLSQPISQHGQLANFLQAHEHLSWLHEINSQELEKAHATLLGLANMETRYFAKKKTLLGLSKLAALASDFSEDMLQEKIEEMAEQERFLLHQETLPEQLLAEKQLNLSAMPVLTAPQLIGLYICEENRRANEYDFKKALDLLEYIDEEEDININDLKLEILCKALQRDNWSSSDGKDDPIEVSKDSIFVKILQKLLKDGIQLSEYLPEVKDLLQADQLGSLKSNPYFEFVLKANYEYYVQGQI.

M1 carries the post-translational modification N-acetylmethionine. A disordered region spans residues 1–39; the sequence is MFPAAPSPRTPGTGSRRGPLAGLGPGSTPRTASRKGLPL. A phosphoserine mark is found at S7 and S15. R17 is modified (omega-N-methylarginine). A Phosphoserine modification is found at S27. Position 28 is a phosphothreonine (T28). Residue R30 is modified to Omega-N-methylarginine. Phosphoserine is present on residues S41, S45, S50, S72, S131, S480, S489, S493, S501, and S755. N6-acetyllysine is present on K787. S1133 is subject to Phosphoserine.

This sequence belongs to the nucleoporin Nup133 family. As to quaternary structure, forms part of the Nup160 subcomplex in the nuclear pore which is composed of NUP160, NUP133, NUP107 and Nup96. This complex plays a role in RNA export and in tethering Nup98 and NUP153 to the nucleus. As to expression, widely expressed in fetal and adult tissues. Expressed in the brain and kidney.

The protein resides in the nucleus. It localises to the nuclear pore complex. Its subcellular location is the chromosome. The protein localises to the centromere. It is found in the kinetochore. In terms of biological role, involved in poly(A)+ RNA transport. Involved in nephrogenesis. This is Nuclear pore complex protein Nup133 (NUP133) from Homo sapiens (Human).